A 258-amino-acid polypeptide reads, in one-letter code: tRNA pseudouridine synthase A (258 aa).

The Nucleophile role is filled by Asp61. Tyr119 serves as a coordination point for substrate.

Belongs to the tRNA pseudouridine synthase TruA family. As to quaternary structure, homodimer.

The catalysed reaction is uridine(38/39/40) in tRNA = pseudouridine(38/39/40) in tRNA. Functionally, formation of pseudouridine at positions 38, 39 and 40 in the anticodon stem and loop of transfer RNAs. This is tRNA pseudouridine synthase A from Chlorobium phaeobacteroides (strain DSM 266 / SMG 266 / 2430).